We begin with the raw amino-acid sequence, 330 residues long: Poly(3-hydroxyalkanoate) polymerase subunit PhaE (330 aa).

Residues 298–328 (RSEVDEIHQTIYQLRKEVKSLKKRLGETEAN) adopt a coiled-coil conformation.

Belongs to the PHA/PHB synthase family. Type III PhaE subfamily. As to quaternary structure, forms a heterodimer with PhaC, which may multimerize in the presence of 3-hydroxybutyryl-CoA. Both subunits are required for PHB synthesis in E.coli and in PHA-negative A.eutrophus.

The protein localises to the cytoplasm. It functions in the pathway biopolymer metabolism; poly-(R)-3-hydroxybutanoate biosynthesis. Functionally, when expressed in E.coli with Synechocystis PhaC and C.necator PhaA and PhaB, confers the ability to synthesize up to 13% (w/w) poly(3-hydroxybutyrate) (PHB) depending on the carbon source; all 4 genes are necessary for PHB production. Cell-free in vitro coexpression with PhaE gives a heterodimer able to polymerize 3-hydroxybutyrate-CoA. This subunit has no catalytic activity but enhances the activity of PhaC, the catalytic subunit. The polypeptide is Poly(3-hydroxyalkanoate) polymerase subunit PhaE (Synechocystis sp. (strain ATCC 27184 / PCC 6803 / Kazusa)).